Consider the following 139-residue polypeptide: Large ribosomal subunit protein uL16 (139 aa).

The span at 1-16 (MLIPKRTKYRKQHRPV) shows a compositional bias: basic residues. The tract at residues 1 to 22 (MLIPKRTKYRKQHRPVRSGMSK) is disordered.

Belongs to the universal ribosomal protein uL16 family. In terms of assembly, part of the 50S ribosomal subunit.

In terms of biological role, binds 23S rRNA and is also seen to make contacts with the A and possibly P site tRNAs. The polypeptide is Large ribosomal subunit protein uL16 (Bifidobacterium longum subsp. infantis (strain ATCC 15697 / DSM 20088 / JCM 1222 / NCTC 11817 / S12)).